Reading from the N-terminus, the 249-residue chain is MIRYKAIISYDGTNFSGFQRQPQVRTVQEEIEKTLLRLNSGQAVKIHGAGRTDAGVHAYGQVIHFDLPQQRDLEKLRFGLDTQTPDDIDVIQVEQVADDFHARYQKHRKTYEFLVDLGRPKNPLMRHYATHFPYKVDFSVVKAAIKKLRGTHDFTGFTASGTSVENKVRTISRATVEKDDKTGFLIFTFTGSGFLYKQVRNMVGTLLKIGNGRMPIDQIDRILESGDRSLAGPTAASNGLYLKEIIYDD.

Catalysis depends on Asp-53, which acts as the Nucleophile. Residue Tyr-111 coordinates substrate.

It belongs to the tRNA pseudouridine synthase TruA family. Homodimer.

It catalyses the reaction uridine(38/39/40) in tRNA = pseudouridine(38/39/40) in tRNA. Its function is as follows. Formation of pseudouridine at positions 38, 39 and 40 in the anticodon stem and loop of transfer RNAs. The polypeptide is tRNA pseudouridine synthase A (Streptococcus mutans serotype c (strain ATCC 700610 / UA159)).